The primary structure comprises 739 residues: BEL1-like homeodomain protein 2 (739 aa).

Disordered regions lie at residues 23–73 and 143–222; these read SQDY…ESSV and LMNP…NSQT. Residues 41–58 are compositionally biased toward polar residues; that stretch reads NFSNGFDRSDSPNLTTQQ. Residues 145–155 show a composition bias toward pro residues; that stretch reads NPPPPQQPPSP. Over residues 179 to 190 the composition is skewed to low complexity; that stretch reads TNTTHHQNYTNH. Positions 316 to 332 are SR/KY domain; that stretch reads SRYTTAAQELLEEFCSV. The disordered stretch occupies residues 341 to 378; sequence KLGNSSNPNTCGGDGGGSSPSSAGANKEHPPLSASDRI. The BELL domain stretch occupies residues 376–447; sequence DRIEHQRRKV…CLKDAVAAQL (72 aa). A DNA-binding region (homeobox) is located at residues 498 to 560; the sequence is AWRPQRGLPE…NARVRLWKPM (63 aa). Residues 567–627 are disordered; it reads QESKEREREE…TAPDASDADA (61 aa). The segment covering 576-585 has biased composition (acidic residues); that stretch reads EELEENEEDQ. The segment covering 586-596 has biased composition (basic and acidic residues); the sequence is ETKNSNDDKST. Over residues 597–627 the composition is skewed to low complexity; that stretch reads KSNNNESNFTAVRTTSQTPTTTAPDASDADA.

Belongs to the TALE/BELL homeobox family. In terms of assembly, may form heterodimeric complexes with TALE/KNOX proteins STM, KNAT1/BP, KNAT2 and KNAT5. Interacts with OFP1, OFP2, OFP4 and OFP5. Interacts with KNATM, isoform KNATM-B. Expressed in lateral organs.

The protein resides in the nucleus. Its function is as follows. Transcription factor that establishes leaf shape by repressing growth in specific subdomains of the leaf. Negatively regulates knox homeobox gene KNAT1/BP expression. This chain is BEL1-like homeodomain protein 2 (BLH2), found in Arabidopsis thaliana (Mouse-ear cress).